The primary structure comprises 310 residues: ADP-L-glycero-D-manno-heptose-6-epimerase (310 aa).

NADP(+) is bound by residues 10–11 (FI), 31–32 (DN), lysine 38, lysine 53, 75–79 (EGACS), and asparagine 92. The Proton acceptor role is filled by tyrosine 140. Lysine 144 serves as a coordination point for NADP(+). Residue asparagine 169 coordinates substrate. The NADP(+) site is built by valine 170 and lysine 178. The Proton acceptor role is filled by lysine 178. Substrate contacts are provided by residues serine 180, histidine 187, 201–204 (FEGS), and arginine 209. Lysine 267 is subject to N6-acetyllysine. Substrate is bound at residue tyrosine 272.

It belongs to the NAD(P)-dependent epimerase/dehydratase family. HldD subfamily. Homopentamer. The cofactor is NADP(+).

It carries out the reaction ADP-D-glycero-beta-D-manno-heptose = ADP-L-glycero-beta-D-manno-heptose. The protein operates within nucleotide-sugar biosynthesis; ADP-L-glycero-beta-D-manno-heptose biosynthesis; ADP-L-glycero-beta-D-manno-heptose from D-glycero-beta-D-manno-heptose 7-phosphate: step 4/4. In terms of biological role, catalyzes the interconversion between ADP-D-glycero-beta-D-manno-heptose and ADP-L-glycero-beta-D-manno-heptose via an epimerization at carbon 6 of the heptose. The polypeptide is ADP-L-glycero-D-manno-heptose-6-epimerase (Escherichia coli (strain SMS-3-5 / SECEC)).